Consider the following 254-residue polypeptide: O-antigen biosynthesis glycosyltransferase WbnJ (254 aa).

This sequence belongs to the glycosyltransferase 2 family.

The catalysed reaction is an N-acetyl-alpha-D-galactosaminyl derivative + UDP-alpha-D-galactose = a beta-D-galactosyl-(1-&gt;3)-N-acetyl-alpha-D-galactosaminyl derivative + UDP + H(+). It carries out the reaction alpha-D-GalNAc-(1-&gt;3)-alpha-D-GalNAc-di-trans,octa-cis-undecaprenyl diphosphate + UDP-alpha-D-galactose = beta-D-Gal-(1-&gt;3)-alpha-D-GalNAc-(1-&gt;3)-alpha-D-GalNAc-di-trans,octa-cis-undecaprenyl diphosphate + UDP + H(+). It participates in bacterial outer membrane biogenesis; LPS O-antigen biosynthesis. Its function is as follows. Involved in the assembly of the O-repeating unit during O-antigen biosynthesis. The sequence is that of O-antigen biosynthesis glycosyltransferase WbnJ from Escherichia coli.